The sequence spans 360 residues: Putative F-box protein At5g55150 (360 aa).

The F-box domain occupies 6–54 (SSWSEFLPELLNTVFHNLNDARDILNCATVCSSWKDSSSAVYYSRTFSP).

This chain is Putative F-box protein At5g55150, found in Arabidopsis thaliana (Mouse-ear cress).